The chain runs to 455 residues: GTPase Der (455 aa).

EngA-type G domains lie at 4–174 (PIVA…PAGQ) and 183–358 (LKIA…SERN). Residues 10-17 (GRPNVGKS), 57-61 (DTAGL), 126-129 (NKAD), 189-196 (GRPNVGKS), 236-240 (DTAGI), and 301-304 (NKWD) each bind GTP. The region spanning 359–444 (KRVSTSDINN…PIILVFKGRE (86 aa)) is the KH-like domain.

This sequence belongs to the TRAFAC class TrmE-Era-EngA-EngB-Septin-like GTPase superfamily. EngA (Der) GTPase family. As to quaternary structure, associates with the 50S ribosomal subunit.

Its function is as follows. GTPase that plays an essential role in the late steps of ribosome biogenesis. This is GTPase Der from Herpetosiphon aurantiacus (strain ATCC 23779 / DSM 785 / 114-95).